Consider the following 939-residue polypeptide: cGMP-dependent 3',5'-cyclic phosphodiesterase (939 aa).

The N-myristoyl glycine moiety is linked to residue G2. 2 S-palmitoyl cysteine lipidation sites follow: C5 and C11. The tract at residues 16 to 38 (YPAARPAEPRGQQVFLKPDEPPP) is disordered. Residue S116 is modified to Phosphoserine. Residues 197–217 (PEAVQNTSVDASEDQKDEKGY) are disordered. 2 GAF domains span residues 236–373 (ATSL…HYTG) and 408–547 (DVSV…GISI). 3',5'-cyclic GMP-binding residues include S430, D445, I464, Y487, and T498. The PDEase domain maps to 577-901 (SDDEYTKLLH…EHWTKVSHKF (325 aa)). The active-site Proton donor is the H655. 4 residues coordinate Zn(2+): H659, H695, D696, and D807. D696 is a binding site for Mg(2+).

It belongs to the cyclic nucleotide phosphodiesterase family. PDE2 subfamily. As to quaternary structure, homodimer. Requires Zn(2+) as cofactor. Mg(2+) is required as a cofactor. As to expression, expressed in brain and liver (at protein level).

The protein localises to the cytoplasm. The protein resides in the mitochondrion matrix. It is found in the mitochondrion inner membrane. Its subcellular location is the mitochondrion outer membrane. It localises to the cell membrane. The catalysed reaction is a nucleoside 3',5'-cyclic phosphate + H2O = a nucleoside 5'-phosphate + H(+). It catalyses the reaction 3',5'-cyclic GMP + H2O = GMP + H(+). The enzyme catalyses 3',5'-cyclic AMP + H2O = AMP + H(+). Its activity is regulated as follows. The 3',5'-cyclic-AMP phosphodiesterase activity is stimulated by 3',5'-cyclic GMP. Specifically inhibited by Bay 60-7550. Functionally, cGMP-activated cyclic nucleotide phosphodiesterase with a dual-specificity for the second messengers cAMP and cGMP, which are key regulators of many important physiological processes. Has a higher efficiency with cGMP compared to cAMP. Plays a role in cell growth and migration. Its function is as follows. Regulates mitochondrial cAMP levels and respiration. Involved in the regulation of mitochondria morphology/dynamics and apoptotic cell death via local modulation of cAMP/PKA signaling in the mitochondrion, including the monitoring of local cAMP levels at the outer mitochondrial membrane and of PKA-dependent phosphorylation of DNM1L. The protein is cGMP-dependent 3',5'-cyclic phosphodiesterase of Mus musculus (Mouse).